The sequence spans 513 residues: 2-isopropylmalate synthase (513 aa).

The Pyruvate carboxyltransferase domain maps to 5-268 (LIIFDTTLRD…DVGVDTSQIV (264 aa)). Positions 14, 202, 204, and 239 each coordinate Mn(2+). The interval 394-513 (RFISLSQRSE…KAVQKINPQI (120 aa)) is regulatory domain.

The protein belongs to the alpha-IPM synthase/homocitrate synthase family. LeuA type 1 subfamily. As to quaternary structure, homodimer. Requires Mn(2+) as cofactor.

The protein resides in the cytoplasm. It catalyses the reaction 3-methyl-2-oxobutanoate + acetyl-CoA + H2O = (2S)-2-isopropylmalate + CoA + H(+). Its pathway is amino-acid biosynthesis; L-leucine biosynthesis; L-leucine from 3-methyl-2-oxobutanoate: step 1/4. Catalyzes the condensation of the acetyl group of acetyl-CoA with 3-methyl-2-oxobutanoate (2-ketoisovalerate) to form 3-carboxy-3-hydroxy-4-methylpentanoate (2-isopropylmalate). The protein is 2-isopropylmalate synthase of Cupriavidus pinatubonensis (strain JMP 134 / LMG 1197) (Cupriavidus necator (strain JMP 134)).